The following is a 509-amino-acid chain: Maturase K (509 aa).

The protein belongs to the intron maturase 2 family. MatK subfamily.

It is found in the plastid. It localises to the chloroplast. In terms of biological role, usually encoded in the trnK tRNA gene intron. Probably assists in splicing its own and other chloroplast group II introns. This Nymphaea odorata (White water lily) protein is Maturase K.